The sequence spans 317 residues: Aspartate carbamoyltransferase catalytic subunit (317 aa).

Carbamoyl phosphate is bound by residues R65 and T66. Residue K93 coordinates L-aspartate. Carbamoyl phosphate is bound by residues R115, H145, and Q148. 2 residues coordinate L-aspartate: R178 and R233. Residues G274 and P275 each coordinate carbamoyl phosphate.

Belongs to the aspartate/ornithine carbamoyltransferase superfamily. ATCase family. In terms of assembly, heterododecamer (2C3:3R2) of six catalytic PyrB chains organized as two trimers (C3), and six regulatory PyrI chains organized as three dimers (R2).

It catalyses the reaction carbamoyl phosphate + L-aspartate = N-carbamoyl-L-aspartate + phosphate + H(+). The protein operates within pyrimidine metabolism; UMP biosynthesis via de novo pathway; (S)-dihydroorotate from bicarbonate: step 2/3. Functionally, catalyzes the condensation of carbamoyl phosphate and aspartate to form carbamoyl aspartate and inorganic phosphate, the committed step in the de novo pyrimidine nucleotide biosynthesis pathway. This chain is Aspartate carbamoyltransferase catalytic subunit, found in Bordetella bronchiseptica (strain ATCC BAA-588 / NCTC 13252 / RB50) (Alcaligenes bronchisepticus).